Consider the following 358-residue polypeptide: MPAVLSSVLSNITDFVVHEGNGVKGLADMGLEALPKQYVQPEEERITTSTVIVDDTIPVIDLSEWGSDPKVGDMNCEAAEKWGFFQIVNHGVPLEVLEEVKAATYRFFRLPAEEKNKHSKDNSPSNNVRYGTSFTPHAEKALEWKDFLSLFYVSDEEAAALWPSACRDEALTFMRNCDAVIKRLLKSLMKGLNVTEIDGTKESLLMGSKRINMNYYPKCPNPELTVGVGRHSDVSTLTILLQDQIGGLYVRKLDSDEWVHVPPINGAIVINVGDALQILSNGRYKSIEHRVIANGSNNRISVPIFVNPRPNDVIGPLPELLESGEKAVYKNVLYSDYVKHFFRKAHDGKETVDFAKIN.

The Fe2OG dioxygenase domain occupies 200 to 308; that stretch reads TKESLLMGSK…RISVPIFVNP (109 aa). Tyr-216 serves as a coordination point for 2-oxoglutarate. Fe cation is bound by residues His-231, Asp-233, and His-289. 2-oxoglutarate contacts are provided by Arg-299 and Ser-301.

The protein belongs to the iron/ascorbate-dependent oxidoreductase family. L-ascorbate is required as a cofactor. Fe(2+) serves as cofactor.

The enzyme catalyses (E)-feruloyl-CoA + 2-oxoglutarate + O2 = (E)-6-hydroxyferuloyl-CoA + succinate + CO2. It functions in the pathway phenylpropanoid metabolism. In terms of biological role, 2-oxoglutarate (OG)- and Fe(II)-dependent dioxygenase (2OGD) involved in scopoletin biosynthesis. Converts feruloyl CoA into 6'-hydroxyferuloyl CoA. This Ipomoea batatas (Sweet potato) protein is Feruloyl CoA ortho-hydroxylase F6H1-1.